The following is a 420-amino-acid chain: Dynein axonemal assembly factor 4 (420 aa).

In terms of domain architecture, CS spans 3–87; sequence LQVSDYSWQQ…KEAAMWETLS (85 aa). A mediates interaction with ESR1 and STUB1 region spans residues 7–103; sequence DYSWQQTKTA…EMMQRIREKS (97 aa). 3 TPR repeats span residues 290 to 323, 324 to 357, and 366 to 399; these read PEWL…NNKM, PLLY…LMPP, and MKAH…DPSN.

As to quaternary structure, interacts with ZMYND10. Interacts with STUB1. Interacts with ESR1 and ESR2. Interacts with DNAAF2. Interacts with CCT3, CCT4, CCT5 and CCT8. Interacts with DNAAF6/PIH1D3.

Its subcellular location is the nucleus. The protein localises to the cytoplasm. The protein resides in the cell projection. It is found in the neuron projection. It localises to the dynein axonemal particle. Its function is as follows. Involved in neuronal migration during development of the cerebral neocortex. May regulate the stability and proteasomal degradation of the estrogen receptors that play an important role in neuronal differentiation, survival and plasticity. Axonemal dynein assembly factor required for ciliary motility. This is Dynein axonemal assembly factor 4 from Pan troglodytes (Chimpanzee).